Consider the following 301-residue polypeptide: Mitochondrial carnitine/acylcarnitine carrier protein (301 aa).

The residue at position 2 (A2) is an N-acetylalanine. Over 2 to 12 (ADEPKPISPFK) the chain is Cytoplasmic. 3 Solcar repeats span residues 8–99 (ISPF…GKKL), 108–196 (LSYP…LKNL), and 207–293 (LSVP…AMKF). A helical transmembrane segment spans residues 13 to 31 (NLLAGGFGGMCLVFVGHPL). Topologically, residues 32 to 73 (DTVKVRLQTQPPSLSGQPPMYSGTLDCFRKTLMREGITGLYR) are mitochondrial matrix. Residues 74–93 (GMAAPIIGVTPMFAVCFFGF) form a helical membrane-spanning segment. Over 94 to 112 (GLGKKLQQKSPEDELSYPQ) the chain is Cytoplasmic. The chain crosses the membrane as a helical span at residues 113–131 (LFTAGMLSGVFTTGIMTPG). The Mitochondrial matrix segment spans residues 132–170 (ERIKCLLQIQASSGENKYSGTLDCAKKLYQEFGIRGFYK). Residues K148 and K157 each carry the N6-acetyllysine modification. K170 is modified (N6-acetyllysine; alternate). At K170 the chain carries N6-succinyllysine; alternate. The chain crosses the membrane as a helical span at residues 171-190 (GTVLTLMRDVPASGMYFMTY). Residues 191–211 (EWLKNLFTPEGKSVSDLSVPR) are Cytoplasmic-facing. Residues 212–230 (ILVAGGFAGIFNWAVAIPP) traverse the membrane as a helical segment. At 231–267 (DVLKSRFQTAPPGKYPNGFRDVLRELIREEGVTSLYK) the chain is on the mitochondrial matrix side. The helical transmembrane segment at 268–287 (GFNAVMIRAFPANAACFLGF) threads the bilayer. The Cytoplasmic segment spans residues 288 to 301 (EIAMKFLNWIAPNL).

It belongs to the mitochondrial carrier (TC 2.A.29) family. Widely expressed, with highest levels in the liver, intermediate levels in heart, testis and kidney and low levels in brain, including cortex, cerebellum, hippocampus and hypothalamus.

Its subcellular location is the mitochondrion inner membrane. The enzyme catalyses O-acetyl-(R)-carnitine(in) + (R)-carnitine(out) = O-acetyl-(R)-carnitine(out) + (R)-carnitine(in). The catalysed reaction is an O-acyl-(R)-carnitine(in) + (R)-carnitine(out) = an O-acyl-(R)-carnitine(out) + (R)-carnitine(in). It carries out the reaction O-propanoyl-(R)-carnitine(in) + (R)-carnitine(out) = O-propanoyl-(R)-carnitine(out) + (R)-carnitine(in). It catalyses the reaction O-hexadecanoyl-(R)-carnitine(in) + (R)-carnitine(out) = O-hexadecanoyl-(R)-carnitine(out) + (R)-carnitine(in). The enzyme catalyses O-octanoyl-(R)-carnitine(in) + (R)-carnitine(out) = O-octanoyl-(R)-carnitine(out) + (R)-carnitine(in). The catalysed reaction is (R)-carnitine(in) = (R)-carnitine(out). Functionally, mediates the electroneutral exchange of acylcarnitines (O-acyl-(R)-carnitine or L-acylcarnitine) of different acyl chain lengths (ranging from O-acetyl-(R)-carnitine to long-chain O-acyl-(R)-carnitines) with free carnitine ((R)-carnitine or L-carnitine) across the mitochondrial inner membrane, via a ping-pong mechanism. Key player in the mitochondrial oxidation pathway, it translocates the fatty acids in the form of acylcarnitines into the mitochondrial matrix, where the carnitine palmitoyltransferase 2 (CPT-2) activates them to undergo fatty acid beta-oxidation. Catalyzes the unidirectional transport (uniport) of carnitine at lower rates than the antiport (exchange). In Mus musculus (Mouse), this protein is Mitochondrial carnitine/acylcarnitine carrier protein.